We begin with the raw amino-acid sequence, 881 residues long: MKEFDEMAKTYDPKEFEDRIYKWWEEEGFFTPKVDKNKKPYTIMMPPPNITGKLHLGHALDCALQDFMIRAKRMQGYEALWLPGQDHASIATEVRVEKEILKEGLNKKEMGREKFLERVWDWTKEYRERIKGQQKKLGVSADFTRESFTMDEKLNKAVRTVFVKLYEDGLIYQGNRITNWCPKCQTALSDAEIEYKEDQGFFWHIKYPVEGEDSFIEIATTRPETMLGDTAVAVNPKDERYKEFIGKLLVLPLLGRKIPVVADDYVDMEFGTGAVKITPAHDPNDYEVGKRHDLKEIVMLNNDGTIKEGFGKYSGMDRYEARKAIVSDLKEEGYLVKIKEHVHNVGTHDRCGNIIEPMVSKQWYVKMESLAKPAIEAVKAGKTKFVPERFDKIYFNWMENIQDWCISRQLWWGHRIPVWYCKDCGEIIVSEKEPKACSKCNSENLEQDKDVLDTWFSSALWPFSTLGWPDKNEDLEYFYPTDTLVTGYDIIFFWVARMVFSGIYNMGEVPFKHVYIHGLVRDAEGRKMSKSLGNGVDPLDVIDTFGADALRFMLITGNAPGNDIRYKTEKVEAARNFANKIWNASRFVLMNLDKEIMDKYKDLEEYSLADRWILSRCNSLVREVTDNIEKFELGIASQKVYDFMWNEFCDWYIELVKPVMYGEDEKAKGIAYNVLYKVLTVGLQLLHPVMPYITEEIYQHLGGEYKAIAISAWPTYEEKLKNETSENAMNQIIEAIKSIRNVRAEMNVPPSKKAKVMIFTEAENKAAFEMGEHYFEKLAYASSVSFLKSKDEAPENAVSSVTKGAELFMPLLDLIDVTKEIERLSKEKDKLKAEIQRVDKKLSNKGFVDKAPESVVEAERVKGEKYKKMLEAVEERIAALK.

A 'HIGH' region motif is present at residues 48 to 58 (PNITGKLHLGH). Positions 527 to 531 (KMSKS) match the 'KMSKS' region motif. Residue Lys-530 coordinates ATP. Coiled coils occupy residues 721 to 747 (KNET…AEMN) and 811 to 881 (LLDL…AALK).

Belongs to the class-I aminoacyl-tRNA synthetase family. ValS type 1 subfamily. In terms of assembly, monomer.

It is found in the cytoplasm. The catalysed reaction is tRNA(Val) + L-valine + ATP = L-valyl-tRNA(Val) + AMP + diphosphate. Functionally, catalyzes the attachment of valine to tRNA(Val). As ValRS can inadvertently accommodate and process structurally similar amino acids such as threonine, to avoid such errors, it has a 'posttransfer' editing activity that hydrolyzes mischarged Thr-tRNA(Val) in a tRNA-dependent manner. The sequence is that of Valine--tRNA ligase from Clostridium acetobutylicum (strain ATCC 824 / DSM 792 / JCM 1419 / IAM 19013 / LMG 5710 / NBRC 13948 / NRRL B-527 / VKM B-1787 / 2291 / W).